The chain runs to 136 residues: Globin CTP-III (136 aa).

The 136-residue stretch at 1–136 folds into the Globin domain; it reads LSADQISTVQ…TFFGMIFSKM (136 aa). H87 serves as a coordination point for heme b.

The protein belongs to the globin family. Monomer.

This Chironomus thummi piger (Midge) protein is Globin CTP-III.